A 367-amino-acid polypeptide reads, in one-letter code: Deoxyhypusine synthase-like protein (367 aa).

The disordered stretch occupies residues 1–23 (MKSLFQRRASKVRETEAMNAPVP).

It belongs to the deoxyhypusine synthase family.

The polypeptide is Deoxyhypusine synthase-like protein (Caulobacter vibrioides (strain ATCC 19089 / CIP 103742 / CB 15) (Caulobacter crescentus)).